Here is a 131-residue protein sequence, read N- to C-terminus: Small ribosomal subunit protein uS8 (131 aa).

The protein belongs to the universal ribosomal protein uS8 family. In terms of assembly, part of the 30S ribosomal subunit. Contacts proteins S5 and S12.

One of the primary rRNA binding proteins, it binds directly to 16S rRNA central domain where it helps coordinate assembly of the platform of the 30S subunit. This chain is Small ribosomal subunit protein uS8, found in Campylobacter jejuni (strain RM1221).